A 683-amino-acid polypeptide reads, in one-letter code: DNA-directed RNA polymerase subunit beta' (683 aa).

Cysteine 69, cysteine 71, cysteine 87, and cysteine 90 together coordinate Zn(2+). Residues aspartate 489, aspartate 491, and aspartate 493 each contribute to the Mg(2+) site.

It belongs to the RNA polymerase beta' chain family. RpoC1 subfamily. In plastids the minimal PEP RNA polymerase catalytic core is composed of four subunits: alpha, beta, beta', and beta''. When a (nuclear-encoded) sigma factor is associated with the core the holoenzyme is formed, which can initiate transcription. The cofactor is Mg(2+). Requires Zn(2+) as cofactor.

The protein resides in the plastid. The protein localises to the chloroplast. The catalysed reaction is RNA(n) + a ribonucleoside 5'-triphosphate = RNA(n+1) + diphosphate. In terms of biological role, DNA-dependent RNA polymerase catalyzes the transcription of DNA into RNA using the four ribonucleoside triphosphates as substrates. This Zea mays (Maize) protein is DNA-directed RNA polymerase subunit beta'.